Consider the following 176-residue polypeptide: Cytochrome b561 homolog 1 (176 aa).

The Cytoplasmic portion of the chain corresponds to 1-7 (MNRFSKT). Residues 8–28 (QIYLHWITLLFVAITYAAMEL) traverse the membrane as a helical segment. His-12 is a heme b binding site. The Periplasmic segment spans residues 29–45 (RGWFPKGSSTYLLMRET). His-46 is a heme b binding site. A helical transmembrane segment spans residues 46–63 (HYNAGIFVWVLMFSRLII). Topologically, residues 64–85 (KHRYSDPSIVPPPPAWQMKAAS) are cytoplasmic. The helical transmembrane segment at 86–106 (LMHIMLYITFLALPLLGIALM) threads the bilayer. Residues 107–141 (AYSGKSWSFLGFNVSPFVTPNSEIKALIKNIHETW) lie on the Periplasmic side of the membrane. His-138 and His-152 together coordinate heme b. A helical transmembrane segment spans residues 142 to 162 (ANIGYFLIAAHAGAALFHHYI). At 163 to 176 (QKDNTLLRMMPRRK) the chain is on the cytoplasmic side.

The protein belongs to the cytochrome b561 family. Heme b is required as a cofactor.

It localises to the cell inner membrane. The chain is Cytochrome b561 homolog 1 (yodB) from Escherichia coli (strain K12).